An 852-amino-acid chain; its full sequence is Phenylalanine--tRNA ligase beta subunit (852 aa).

In terms of domain architecture, tRNA-binding spans 44-159 (PETTGPLVIG…DADLASANLK (116 aa)). In terms of domain architecture, B5 spans 428–510 (PEMPMITIHT…RLEGLEDIPS (83 aa)). Positions 488, 494, 497, and 498 each coordinate Mg(2+). Residues 758–851 (SAFPAVLQDI…ATEKVGAQLR (94 aa)) enclose the FDX-ACB domain.

The protein belongs to the phenylalanyl-tRNA synthetase beta subunit family. Type 1 subfamily. As to quaternary structure, tetramer of two alpha and two beta subunits. Mg(2+) is required as a cofactor.

It is found in the cytoplasm. The enzyme catalyses tRNA(Phe) + L-phenylalanine + ATP = L-phenylalanyl-tRNA(Phe) + AMP + diphosphate + H(+). The sequence is that of Phenylalanine--tRNA ligase beta subunit from Corynebacterium jeikeium (strain K411).